The chain runs to 78 residues: Probable Vpr-like protein (78 aa).

Positions 35–43 match the Nuclear export signal motif; that stretch reads AIRLLQGLF. Residues 45-54 carry the Nuclear localization signal motif; it reads RYRFKKPRVD.

The protein resides in the virion. The protein localises to the host nucleus. In terms of biological role, seems to function as a Vpr-like protein, since it mediates host cell cycle arrest in G2 phase. Cell cycle arrest creates a favorable environment for maximizing viral expression and production. In Feline immunodeficiency virus (isolate Petaluma) (FIV), this protein is Probable Vpr-like protein.